A 289-amino-acid polypeptide reads, in one-letter code: ATP synthase subunit a (289 aa).

6 helical membrane-spanning segments follow: residues 43–63 (AFHV…LFIF), 104–124 (IAPL…IDLV), 160–180 (ISVF…GGFL), 193–213 (IVVQ…TLIA), 232–252 (IFIL…ALGV), and 259–279 (AVFH…LTIV).

This sequence belongs to the ATPase A chain family. As to quaternary structure, F-type ATPases have 2 components, CF(1) - the catalytic core - and CF(0) - the membrane proton channel. CF(1) has five subunits: alpha(3), beta(3), gamma(1), delta(1), epsilon(1). CF(0) has three main subunits: a(1), b(2) and c(9-12). The alpha and beta chains form an alternating ring which encloses part of the gamma chain. CF(1) is attached to CF(0) by a central stalk formed by the gamma and epsilon chains, while a peripheral stalk is formed by the delta and b chains.

The protein resides in the cell inner membrane. In terms of biological role, key component of the proton channel; it plays a direct role in the translocation of protons across the membrane. In Pseudomonas paraeruginosa (strain DSM 24068 / PA7) (Pseudomonas aeruginosa (strain PA7)), this protein is ATP synthase subunit a.